A 980-amino-acid chain; its full sequence is Exportin-T (980 aa).

It belongs to the exportin family. As to expression, expressed in roots, stems, leaves, flowers and embryos.

The protein localises to the nucleus. Its subcellular location is the cytoplasm. Its function is as follows. Probable tRNA nucleus export receptor which regulates tRNA processing and facilitates tRNA translocation across the nuclear pore complex. Is required for correct leaf initiation at different developmental stages and may play a role in floral patterning. In Oryza sativa subsp. japonica (Rice), this protein is Exportin-T.